The primary structure comprises 294 residues: Glyceraldehyde-3-phosphate dehydrogenase (294 aa).

Asp-19, Lys-63, and Thr-105 together coordinate NAD(+). Residues Ser-134–Thr-136 and Thr-165 each bind D-glyceraldehyde 3-phosphate. Cys-135 serves as the catalytic Nucleophile. Residues Lys-169–Asn-188 form a disordered region. D-glyceraldehyde 3-phosphate contacts are provided by residues Thr-194–Gly-195 and Arg-217.

It belongs to the glyceraldehyde-3-phosphate dehydrogenase family. In terms of assembly, homotetramer.

The protein localises to the cytoplasm. It carries out the reaction D-glyceraldehyde 3-phosphate + phosphate + NAD(+) = (2R)-3-phospho-glyceroyl phosphate + NADH + H(+). It participates in carbohydrate degradation; glycolysis; pyruvate from D-glyceraldehyde 3-phosphate: step 1/5. Functionally, catalyzes the oxidative phosphorylation of glyceraldehyde 3-phosphate (G3P) to 1,3-bisphosphoglycerate (BPG) using the cofactor NAD. The first reaction step involves the formation of a hemiacetal intermediate between G3P and a cysteine residue, and this hemiacetal intermediate is then oxidized to a thioester, with concomitant reduction of NAD to NADH. The reduced NADH is then exchanged with the second NAD, and the thioester is attacked by a nucleophilic inorganic phosphate to produce BPG. In Serratia marcescens, this protein is Glyceraldehyde-3-phosphate dehydrogenase (gap).